The following is a 291-amino-acid chain: 5'-3' exonuclease (291 aa).

Residues alanine 176 to lysine 269 form the 5'-3' exonuclease domain.

Its function is as follows. 5'-3' exonuclease acting preferentially on double-stranded DNA. The protein is 5'-3' exonuclease (polA) of Mycoplasma genitalium (strain ATCC 33530 / DSM 19775 / NCTC 10195 / G37) (Mycoplasmoides genitalium).